The following is a 694-amino-acid chain: MDSKYFATSRNDAVGPSPVKFSFKRKYDAMANSPILEKKPHVAQIKQTIAPILLTSKRTSIEQQQKSLPVFNCRHRILKELEANDTVLIMSETGSGKTTQIPQFLLLAGYAKNGMIGITQPRRVAAITVARRVAQELNGTIGDTVGYTVRFEDVTSRATKIRFLTDGVLLRESIKDRLLLKYSVIILDEAHERTVNADLLFGIVKDAQKERRKQKLANLKVVVTSATMDIDHFGNYFNCKGMYLEGRTYPVRVMHTKEEHEDYIHTVLVTLFHIHRTTPKNHDVLIFLTGQEEIESLAQQIRQLAKIDTTGTTDLRVFTLYAQLSQGKQLECFVPTPANVRKVILATNIAETSITIPGIRCVIDCGFVKEKSFNTVDGLDVLKSVRISKAQAWQRAGRAGRDADGTCYRAYTKAEMDSFADATQPEILRTNPTSMVLQLLALDIDCNNFDFLDPPLEDGLRSAYKSLDALGAIKTGDDSYITPLGRQMVQYPLDPKYSKLLLTASSFGCMEEILSLVSVLSSDHVFVSNSEKNEMAALAHAKFQSKHGDHLTLLNVFNGFLKSEKPKMWCHDNYLNLRSLTYARNVRRQLREISEHLHLALNSSDDIEMLKKCILNGFFENIAVLQRDGFYITASGNIRSKIHPSSVLHGKYKPSYILFTEIVQTEQTFLRQVTEISIEWIKEVVPFVKNIPTR.

The Helicase ATP-binding domain maps to 78–246 (LKELEANDTV…FNCKGMYLEG (169 aa)). Residue 91–98 (SETGSGKT) participates in ATP binding. The DEAH box motif lies at 188-191 (DEAH). Positions 270 to 443 (TLFHIHRTTP…SMVLQLLALD (174 aa)) constitute a Helicase C-terminal domain.

The protein belongs to the DEAD box helicase family. DEAH subfamily.

The protein localises to the nucleus. Its subcellular location is the nucleolus. The catalysed reaction is ATP + H2O = ADP + phosphate + H(+). In terms of biological role, part of a translational control module, also containing pths/DDX47 and ais/DDX52, which coordinates germline stem cell differentiation with ribosome biogenesis during oogenesis. This module allows for coregulation of ribosomal proteins and non1/GTPBP4, a p53 repressor, preventing p53 stabilization, cell cycle arrest and loss of stem cell differentiation. The sequence is that of ATP-dependent RNA helicase DHX33 from Drosophila melanogaster (Fruit fly).